Consider the following 281-residue polypeptide: Large ribosomal subunit protein uL2 (281 aa).

Disordered regions lie at residues 1–23 and 224–281; these read MAVK…DYSK and RGSV…KDSK. Over residues 12–23 the composition is skewed to polar residues; sequence GRRNMSSLDYSK. Positions 261-281 are enriched in basic residues; sequence KTRKTKKSSTKLILRRRKDSK.

Belongs to the universal ribosomal protein uL2 family. Part of the 50S ribosomal subunit. Forms a bridge to the 30S subunit in the 70S ribosome.

Its function is as follows. One of the primary rRNA binding proteins. Required for association of the 30S and 50S subunits to form the 70S ribosome, for tRNA binding and peptide bond formation. It has been suggested to have peptidyltransferase activity; this is somewhat controversial. Makes several contacts with the 16S rRNA in the 70S ribosome. The sequence is that of Large ribosomal subunit protein uL2 from Mycoplasmopsis agalactiae (strain NCTC 10123 / CIP 59.7 / PG2) (Mycoplasma agalactiae).